Consider the following 147-residue polypeptide: MTTDIIKTILLVIVIIAAAAVGLIKGDFFSADQKTSQTKEYDETMAFPSDRYPETAKHIKDAINEGHSEVCTIDRDGAEERREQSLKDVPSKKGYDRDEWPMAMCKEGGEGASVEYISPADNRGAGSWVGHRLTDYPDGTKVLFTIQ.

Residues 8–24 (TILLVIVIIAAAAVGLI) traverse the membrane as a helical segment. Positions 75 to 100 (RDGAEERREQSLKDVPSKKGYDRDEW) are disordered.

It to B.subtilis NucB. This protein is a subunit of a 75 kDa protein complex, which governs binding and entry of donor DNA. The complex is a tetramer of two subunits of the DNA-entry nuclease and two subunits of a competence-specific protein. Only the complex is able to bind ds- and ss-DNA. Requires Mn(2+) as cofactor.

Its subcellular location is the cell membrane. The activity can be inhibited by the 18 kDa competence-specific protein nin. Functionally, by degrading DNA that enters the cell, plays a role in the competence of cells to be transformed. Degrades both double-stranded, linear and covalently closed circular DNA. This is DNA-entry nuclease (nucA) from Bacillus subtilis (strain 168).